The chain runs to 198 residues: MENGMYKKKGVCDSCVSSKSRSNHSPKRSMMEPQPHHLLMDWNKANDLLTQEHAAFLNDPHHLMLDPPPETLIHLDEDEEYDEDMDAMKEMQYMIAVMQPVDIDPATVPKPNRRNVRISDDPQTVVARRRRERISEKIRILKRIVPGGAKMDTASMLDEAIRYTKFLKRQVRILQPHSQIGAPMANPSYLCYYHNSQP.

Residues 1–33 (MENGMYKKKGVCDSCVSSKSRSNHSPKRSMMEP) form a disordered region. One can recognise a bHLH domain in the interval 118 to 167 (ISDDPQTVVARRRRERISEKIRILKRIVPGGAKMDTASMLDEAIRYTKFL).

Homodimer. Heterodimer; possibly with ALC. After fertilization, it is expressed in stripes about four cells wide at the margins of developing wild-type fruit. Also expressed in the inner valve layer, which becomes lignified later in fruit development. Detected in roots.

It localises to the nucleus. Transcription regulator required for seed dispersal. Involved in the differentiation of all three cell types required for fruit dehiscence. Acts as the key regulator in a network including SHP and ALC that controls specification of the valve margin. Works with ALC, SHP, and FUL to allow differentiation of the lignified valve layer, the spring-loaded mechanism of fruit that promotes opening. Regulates the expression of the YJ80 marker. This is Transcription factor IND (IND) from Arabidopsis thaliana (Mouse-ear cress).